Here is a 147-residue protein sequence, read N- to C-terminus: Small ribosomal subunit protein uS5 (147 aa).

In terms of domain architecture, S5 DRBM spans 9-72 (FEEVIVDIGR…DDAFKNIIHV (64 aa)).

This sequence belongs to the universal ribosomal protein uS5 family. Part of the 30S ribosomal subunit. Contacts proteins S4 and S8.

Functionally, with S4 and S12 plays an important role in translational accuracy. Located at the back of the 30S subunit body where it stabilizes the conformation of the head with respect to the body. This chain is Small ribosomal subunit protein uS5, found in Campylobacter curvus (strain 525.92).